The following is a 412-amino-acid chain: Maintenance of mitochondrial morphology protein 1 (412 aa).

The Lumenal portion of the chain corresponds to 1 to 81 (MTKELIKTEA…PANNWTFTQG (81 aa)). A helical membrane pass occupies residues 82-102 (LVLGQISVIFIIIVFVKFFVF). Over 103 to 412 (ADSSTIPTKK…RSDSGTSENL (310 aa)) the chain is Cytoplasmic. The region spanning 165-382 (SPESLDWFNV…EPRFQVVRLP (218 aa)) is the SMP-LTD domain. The interval 389–412 (KNTREPINKKTSVSRSDSGTSENL) is disordered. Positions 397–412 (KKTSVSRSDSGTSENL) are enriched in polar residues.

The protein belongs to the MMM1 family. In terms of assembly, homodimer. Component of the ER-mitochondria encounter structure (ERMES) or MDM complex, composed of MMM1, MDM10, MDM12 and MDM34. An MMM1 homodimer associates with one molecule of MDM12 on each side in a pairwise head-to-tail manner, and the SMP-LTD domains of MMM1 and MDM12 generate a continuous hydrophobic tunnel for phospholipid trafficking.

It is found in the endoplasmic reticulum membrane. Functionally, component of the ERMES/MDM complex, which serves as a molecular tether to connect the endoplasmic reticulum (ER) and mitochondria. Components of this complex are involved in the control of mitochondrial shape and protein biogenesis, and function in nonvesicular lipid trafficking between the ER and mitochondria. The MDM12-MMM1 subcomplex functions in the major beta-barrel assembly pathway that is responsible for biogenesis of all outer membrane beta-barrel proteins, and acts in a late step after the SAM complex. The MDM10-MDM12-MMM1 subcomplex further acts in the TOM40-specific pathway after the action of the MDM12-MMM1 complex. Essential for establishing and maintaining the structure of mitochondria and maintenance of mtDNA nucleoids. This Candida tropicalis (strain ATCC MYA-3404 / T1) (Yeast) protein is Maintenance of mitochondrial morphology protein 1.